The chain runs to 630 residues: Chaperone protein DnaK (630 aa).

Phosphothreonine; by autocatalysis is present on Thr-198. The interval 604-630 is disordered; sequence AAAAPGEEAPKDDDVVDAEFSEVDDKK. Positions 617-630 are enriched in acidic residues; sequence DVVDAEFSEVDDKK.

Belongs to the heat shock protein 70 family.

Acts as a chaperone. The polypeptide is Chaperone protein DnaK (Rhizorhabdus wittichii (strain DSM 6014 / CCUG 31198 / JCM 15750 / NBRC 105917 / EY 4224 / RW1) (Sphingomonas wittichii)).